Here is a 398-residue protein sequence, read N- to C-terminus: GTP cyclohydrolase-2 (398 aa).

A unknown region spans residues 1-172 (MNTPTHTHPH…TAAACASTTE (172 aa)). Positions 173 to 398 (YELVTRTPVP…VKPIAKTGHA (226 aa)) are GTP cyclohydrolase II. Residue 220-224 (RVHSS) participates in GTP binding. Residues Cys-225, Cys-236, and Cys-238 each coordinate Zn(2+). GTP-binding positions include Gln-241, 263-265 (EGR), and Thr-285. The active-site Proton acceptor is the Asp-297. Catalysis depends on Arg-299, which acts as the Nucleophile. The GTP site is built by Ser-320 and Lys-325. A disordered region spans residues 375–398 (QRPQDPSETVDGETVKPIAKTGHA).

The protein in the C-terminal section; belongs to the GTP cyclohydrolase II family. It depends on Zn(2+) as a cofactor.

The enzyme catalyses GTP + 4 H2O = 2,5-diamino-6-hydroxy-4-(5-phosphoribosylamino)-pyrimidine + formate + 2 phosphate + 3 H(+). It functions in the pathway cofactor biosynthesis; riboflavin biosynthesis; 5-amino-6-(D-ribitylamino)uracil from GTP: step 1/4. In terms of biological role, catalyzes the conversion of GTP to 2,5-diamino-6-ribosylamino-4(3H)-pyrimidinone 5'-phosphate (DARP), formate and pyrophosphate. This chain is GTP cyclohydrolase-2 (ribA), found in Xylella fastidiosa (strain Temecula1 / ATCC 700964).